The sequence spans 736 residues: 3',5'-cyclic-AMP phosphodiesterase 4B (736 aa).

Disordered regions lie at residues 51–78 (QLPP…TTLP), 189–209 (LHGT…SRVN), and 282–301 (KQND…KKKK). Ser290 is modified (phosphoserine). A PDEase domain is found at 330–659 (VNTENEDHLA…NWYQSMIPQS (330 aa)). The Proton donor role is filled by His406. Residue His406 participates in 3',5'-cyclic AMP binding. AMP-binding residues include His406 and His410. Residues His410, His446, Asp447, and Asp564 each contribute to the Zn(2+) site. Asp447, Asp564, Gln615, and Phe618 together coordinate AMP. Mg(2+) is bound at residue Asp447. Asp447 provides a ligand contact to Mn(2+). 2 residues coordinate 3',5'-cyclic AMP: Gln615 and Phe618. A phosphoserine mark is found at Ser659 and Ser661. The segment at 685–736 (DEEDSEGPEKEGEGHSYFSSTKTLCVIDPENRDSLGETDIDIATEDKSPVDT) is disordered.

Belongs to the cyclic nucleotide phosphodiesterase family. PDE4 subfamily. In terms of assembly, interacts with DISC1. It depends on Zn(2+) as a cofactor. Mg(2+) serves as cofactor. Mn(2+) is required as a cofactor. In terms of tissue distribution, expressed in brain, heart, lung and skeletal muscle. Expressed in white blood cells. Brain-specific isoform.

Its subcellular location is the cytoplasm. It is found in the cell membrane. It carries out the reaction 3',5'-cyclic AMP + H2O = AMP + H(+). The protein operates within purine metabolism; 3',5'-cyclic AMP degradation; AMP from 3',5'-cyclic AMP: step 1/1. Inhibited by rolipram. In terms of biological role, hydrolyzes the second messenger cAMP, which is a key regulator of many important physiological processes. May be involved in mediating central nervous system effects of therapeutic agents ranging from antidepressants to antiasthmatic and anti-inflammatory agents. The polypeptide is 3',5'-cyclic-AMP phosphodiesterase 4B (Homo sapiens (Human)).